The chain runs to 344 residues: Outer membrane protein assembly factor BamC (344 aa).

An N-terminal signal peptide occupies residues methionine 1–alanine 24. Cysteine 25 is lipidated: N-palmitoyl cysteine. Residue cysteine 25 is the site of S-diacylglycerol cysteine attachment.

This sequence belongs to the BamC family. As to quaternary structure, part of the Bam complex, which is composed of the outer membrane protein BamA, and four lipoproteins BamB, BamC, BamD and BamE. Forms a subcomplex with BamD and BamE. The Bam complex has the shape of a hat, with the BamA beta-barrel crown in the outer membrane and the periplasmic brim formed by the BamA POTRA domains and the 4 lipoproteins.

Its subcellular location is the cell outer membrane. Its function is as follows. Part of the outer membrane protein assembly complex (Bam), which is involved in assembly and insertion of beta-barrel proteins into the outer membrane. Nonessential member of the complex that stabilizes the interaction between the essential proteins BamA and BamD. Efficient substrate folding and insertion into the outer membrane requires all 5 subunits. A lateral gate may open between the first and last strands of the BamA beta-barrel that allows substrate to insert into the outer membrane; comparison of the structures of complete and nearly complete Bam complexes show there is considerable movement of all 5 proteins. This chain is Outer membrane protein assembly factor BamC, found in Escherichia coli (strain K12).